Reading from the N-terminus, the 89-residue chain is Small ribosomal subunit protein uS15 (89 aa).

The interval 1-24 is disordered; that stretch reads MSLDTTEKQQLINSHQTHATDTGS. A compositionally biased stretch (polar residues) spans 8 to 24; sequence KQQLINSHQTHATDTGS.

This sequence belongs to the universal ribosomal protein uS15 family. As to quaternary structure, part of the 30S ribosomal subunit. Forms a bridge to the 50S subunit in the 70S ribosome, contacting the 23S rRNA.

One of the primary rRNA binding proteins, it binds directly to 16S rRNA where it helps nucleate assembly of the platform of the 30S subunit by binding and bridging several RNA helices of the 16S rRNA. Functionally, forms an intersubunit bridge (bridge B4) with the 23S rRNA of the 50S subunit in the ribosome. The protein is Small ribosomal subunit protein uS15 of Synechococcus sp. (strain CC9311).